A 492-amino-acid polypeptide reads, in one-letter code: GTPase Der (492 aa).

2 consecutive EngA-type G domains span residues 3–167 and 201–381; these read FTLA…DAYA and LQVA…EVWN. GTP is bound by residues 9-16, 56-60, 119-122, 207-214, 259-263, and 324-327; these read GRPNVGKS, DTAGL, NKAE, GRPNAGKS, DTAGM, and NKWD. The region spanning 382-468 is the KH-like domain; the sequence is RRVTTAQLNR…RLWMRGQNDA (87 aa). A disordered region spans residues 462–492; the sequence is MRGQNDANPYKGRKKAPPSKLRKHTDGRRKD. Over residues 472–492 the composition is skewed to basic residues; it reads KGRKKAPPSKLRKHTDGRRKD.

It belongs to the TRAFAC class TrmE-Era-EngA-EngB-Septin-like GTPase superfamily. EngA (Der) GTPase family. Associates with the 50S ribosomal subunit.

GTPase that plays an essential role in the late steps of ribosome biogenesis. The polypeptide is GTPase Der (Roseobacter denitrificans (strain ATCC 33942 / OCh 114) (Erythrobacter sp. (strain OCh 114))).